A 121-amino-acid chain; its full sequence is Two-component response regulator ORR8 (121 aa).

One can recognise a Response regulatory domain in the interval 5-121 (HVLVVDDTHV…VDVPRIMKYI (117 aa)). Asp55 is modified (4-aspartylphosphate).

This sequence belongs to the ARR family. Type-A subfamily. In terms of processing, two-component system major event consists of a His-to-Asp phosphorelay between a sensor histidine kinase (HK) and a response regulator (RR). In plants, the His-to-Asp phosphorelay involves an additional intermediate named Histidine-containing phosphotransfer protein (HPt). This multistep phosphorelay consists of a His-Asp-His-Asp sequential transfer of a phosphate group between first a His and an Asp of the HK protein, followed by the transfer to a conserved His of the HPt protein and finally the transfer to an Asp in the receiver domain of the RR protein. In terms of tissue distribution, expressed in mature leaves, and at low levels in roots, shoots and flowers.

In terms of biological role, functions as a response regulator involved in His-to-Asp phosphorelay signal transduction system. Phosphorylation of the Asp residue in the receiver domain activates the ability of the protein to promote the transcription of target genes. Type-A response regulators seem to act as negative regulators of the cytokinin signaling. This is Two-component response regulator ORR8 from Oryza sativa subsp. indica (Rice).